Reading from the N-terminus, the 386-residue chain is Putative 8-amino-7-oxononanoate synthase 2 (386 aa).

Arg-21 is a substrate binding site. A pyridoxal 5'-phosphate-binding site is contributed by 104-105 (GY). Position 129 (His-129) interacts with substrate. Residues Ser-176, 201-204 (DDAH), and 230-233 (TLSK) contribute to the pyridoxal 5'-phosphate site. Position 233 is an N6-(pyridoxal phosphate)lysine (Lys-233).

It belongs to the class-II pyridoxal-phosphate-dependent aminotransferase family. BioF subfamily. As to quaternary structure, homodimer. It depends on pyridoxal 5'-phosphate as a cofactor.

It catalyses the reaction 6-carboxyhexanoyl-[ACP] + L-alanine + H(+) = (8S)-8-amino-7-oxononanoate + holo-[ACP] + CO2. The protein operates within cofactor biosynthesis; biotin biosynthesis. Catalyzes the decarboxylative condensation of pimeloyl-[acyl-carrier protein] and L-alanine to produce 8-amino-7-oxononanoate (AON), [acyl-carrier protein], and carbon dioxide. The protein is Putative 8-amino-7-oxononanoate synthase 2 (bioF) of Bacillus velezensis (strain DSM 23117 / BGSC 10A6 / LMG 26770 / FZB42) (Bacillus amyloliquefaciens subsp. plantarum).